We begin with the raw amino-acid sequence, 147 residues long: Putative acetyltransferase BSU40680 (147 aa).

The 144-residue stretch at 1–144 (MNVKKITSEQ…PHVLMTKQDD (144 aa)) folds into the N-acetyltransferase domain. CoA contacts are provided by residues 74-76 (ICI) and 115-117 (GFY).

Belongs to the UPF0039 (ElaA) family.

In terms of biological role, could catalyze the transfer of an acetyl group from acetyl coenzyme A (AcCoA) to an acceptor substrate and release both CoA and the acetylated product. The sequence is that of Putative acetyltransferase BSU40680 (yybD) from Bacillus subtilis (strain 168).